Reading from the N-terminus, the 153-residue chain is MVTAFLNERQATTEEMALVSNALAAYSFIADQPERAALYFVCGVCLGLVLTLIALVVQISCRTDCKTQQAPKKTGKTVENTSDTSDSDSDWDNTSDLSARRHRRFERTLGNVFTSAEELERAQRLEERERIIREIWMNGQPDMPGTRSLNRYY.

The chain crosses the membrane as a helical span at residues 37-57; the sequence is ALYFVCGVCLGLVLTLIALVV. The segment at 66 to 97 is disordered; that stretch reads KTQQAPKKTGKTVENTSDTSDSDSDWDNTSDL.

It belongs to the EVA1 family.

The protein localises to the endoplasmic reticulum membrane. It is found in the lysosome membrane. Its function is as follows. Acts as a regulator of programmed cell death, mediating both autophagy and apoptosis. The polypeptide is Protein eva-1 homolog A (Eva1a) (Danio rerio (Zebrafish)).